A 415-amino-acid polypeptide reads, in one-letter code: Mitochondrial tRNA-specific 2-thiouridylase 1 (415 aa).

ATP contacts are provided by residues 37–44 (AMSGGVDS) and Met63. An interaction with target base in tRNA region spans residues 124-126 (NPD). Cys129 (nucleophile) is an active-site residue. Cys129 and Cys234 form a disulfide bridge. An ATP-binding site is contributed by Gly159. The interaction with tRNA stretch occupies residues 183–185 (KDQ). Cys234 functions as the Cysteine persulfide intermediate in the catalytic mechanism. Residues 356 to 357 (RH) form an interaction with tRNA region.

Belongs to the MnmA/TRMU family.

It localises to the mitochondrion. The enzyme catalyses 5-taurinomethyluridine(34) in tRNA + S-sulfanyl-L-cysteinyl-[protein] + AH2 + ATP = 5-taurinomethyl-2-thiouridine(34) in tRNA + L-cysteinyl-[protein] + A + AMP + diphosphate + H(+). Its function is as follows. Catalyzes the 2-thiolation of uridine at the wobble position (U34) of mitochondrial tRNA(Lys), tRNA(Glu) and tRNA(Gln). Required for the formation of 5-taurinomethyl-2-thiouridine (tm5s2U) of mitochondrial tRNA(Lys), tRNA(Glu), and tRNA(Gln) at the wobble position. ATP is required to activate the C2 atom of the wobble base. This chain is Mitochondrial tRNA-specific 2-thiouridylase 1, found in Schizosaccharomyces pombe (strain 972 / ATCC 24843) (Fission yeast).